The chain runs to 297 residues: Phosphoribosylaminoimidazole-succinocarboxamide synthase (297 aa).

The protein belongs to the SAICAR synthetase family.

It catalyses the reaction 5-amino-1-(5-phospho-D-ribosyl)imidazole-4-carboxylate + L-aspartate + ATP = (2S)-2-[5-amino-1-(5-phospho-beta-D-ribosyl)imidazole-4-carboxamido]succinate + ADP + phosphate + 2 H(+). Its pathway is purine metabolism; IMP biosynthesis via de novo pathway; 5-amino-1-(5-phospho-D-ribosyl)imidazole-4-carboxamide from 5-amino-1-(5-phospho-D-ribosyl)imidazole-4-carboxylate: step 1/2. This chain is Phosphoribosylaminoimidazole-succinocarboxamide synthase, found in Mycobacterium ulcerans (strain Agy99).